The chain runs to 616 residues: MALLQISEPGLSAAPHQRRLAAGIDLGTTNSLVATVRSGQAETLPDHEGRHLLPSVVHYQQQGHTVGYAARDNAAQDTANTISSVKRMMGRSLADIQSRYPHLPYRFQASENGLPMIETAAGLLNPVRVSADILKALAARASESLSGELDGVVITVPAYFDDAQRQGTKDAARLAGLHVLRLLNEPTAAAIAYGLDSGKEGVIAVYDLGGGTFDISILRLSCGVFEVLATGGDSALGGDDFDHLLADYIREQAGIADRSDNRVQRELLDAAIAAKIALSDADTVRVNVAGWQGEITREQFNDLIAALVKRTLLACRRALKDADVDPQEVLEVVMVGGSTRVPLVRERVGEFFGRTPLTAIDPDKVVAIGAAIQADILVGNKPDSEMLLLDVIPLSLGLETMGGLVEKVIPRNTTIPVARAQDFTTFKDGQTAMSIHVMQGERELAQDCRSLARFALRGIPALPAGGAHIRVTFQVDADGLLSVTAMEKSTGIEASIQVKPSYGLTDSEIASMIKDSMSFAEQDVKARMLAEQKVEAARVLESLTGALTADAALLSAAERQCIDDAAAHLNAVAQGDDVDAIEQAIKNVDKQTQEFAARRMDQSVRRALKGHSVDEV.

The protein belongs to the heat shock protein 70 family.

In terms of biological role, chaperone involved in the maturation of iron-sulfur cluster-containing proteins. Has a low intrinsic ATPase activity which is markedly stimulated by HscB. Involved in the maturation of IscU. The chain is Chaperone protein HscA from Salmonella arizonae (strain ATCC BAA-731 / CDC346-86 / RSK2980).